The primary structure comprises 296 residues: Glycine--tRNA ligase alpha subunit (296 aa).

It belongs to the class-II aminoacyl-tRNA synthetase family. Tetramer of two alpha and two beta subunits.

It localises to the cytoplasm. It catalyses the reaction tRNA(Gly) + glycine + ATP = glycyl-tRNA(Gly) + AMP + diphosphate. This Listeria monocytogenes serotype 4b (strain CLIP80459) protein is Glycine--tRNA ligase alpha subunit.